Consider the following 157-residue polypeptide: Small ribosomal subunit protein uS17 (157 aa).

This sequence belongs to the universal ribosomal protein uS17 family.

This is Small ribosomal subunit protein uS17 (RPS11) from Dunaliella tertiolecta (Green alga).